A 520-amino-acid chain; its full sequence is MTIAITIISSLLFLIVGLVVGSLIFKSSTEKKLAAARGTAELIVEDAKKEAETTKKEALLEAKEENHRLRTEIENELRGRRTETQKAENRLLQREENLDRKDTSLSKREATLERKEESISKRQQQIEEKESKLAEMIQAEQTELERISALSKEEAKSIILNQVEDELTHDTAIMVKETENRAKEESDKKAKNILSLAIQRCAADHVAETTVSVVTLPNDEMKGRIIGREGRNIRTLETLTGIDLIIDDTPEAVILSGFDPIRREIARIALEKLVQDGRIHPARIEEMVDKARKEVDEHIREVGEQATFEVGIHSIHPDLIKILGRLRYRTSYGQNVLNHSLEVSKLAGILAGELGEDVTLAKRAGLLHDIGKAIDHEIEGSHVEIGVELATKYKENDVVINSIASHHGDTEATSVIAVLVAAADALSAARPGARSETLENYIRRLEKLEEISESYDGVEKSYAIQAGREVRIIVEPDTIDDLSSYRLARDIRKRIEEELDYPGHIKVTVIRETRAVEYAK.

The chain crosses the membrane as a helical span at residues 5–25 (ITIISSLLFLIVGLVVGSLIF). The tract at residues 70 to 127 (RTEIENELRGRRTETQKAENRLLQREENLDRKDTSLSKREATLERKEESISKRQQQIE) is disordered. Residues 210 to 273 (TVSVVTLPND…EIARIALEKL (64 aa)) enclose the KH domain. An HD domain is found at 336–429 (VLNHSLEVSK…VAAADALSAA (94 aa)).

This sequence belongs to the RNase Y family.

It localises to the cell membrane. Its function is as follows. Endoribonuclease that initiates mRNA decay. The polypeptide is Ribonuclease Y (Listeria welshimeri serovar 6b (strain ATCC 35897 / DSM 20650 / CCUG 15529 / CIP 8149 / NCTC 11857 / SLCC 5334 / V8)).